The following is a 263-amino-acid chain: Ribosomal RNA small subunit methyltransferase J (263 aa).

S-adenosyl-L-methionine is bound by residues R108–D109, E124–R125, and D178.

The protein belongs to the methyltransferase superfamily. RsmJ family.

The protein localises to the cytoplasm. It carries out the reaction guanosine(1516) in 16S rRNA + S-adenosyl-L-methionine = N(2)-methylguanosine(1516) in 16S rRNA + S-adenosyl-L-homocysteine + H(+). Its function is as follows. Specifically methylates the guanosine in position 1516 of 16S rRNA. The protein is Ribosomal RNA small subunit methyltransferase J of Idiomarina loihiensis (strain ATCC BAA-735 / DSM 15497 / L2-TR).